We begin with the raw amino-acid sequence, 219 residues long: Redox-sensing transcriptional repressor Rex (219 aa).

The segment at residues 17–56 (LYYRIFKRFHRENIVKTSSKQIAEAIGIDPATVRRDFSYF) is a DNA-binding region (H-T-H motif). 91-96 (GVGNIG) provides a ligand contact to NAD(+).

Belongs to the transcriptional regulatory Rex family. In terms of assembly, homodimer.

Its subcellular location is the cytoplasm. Functionally, modulates transcription in response to changes in cellular NADH/NAD(+) redox state. The protein is Redox-sensing transcriptional repressor Rex of Streptococcus thermophilus (strain ATCC BAA-491 / LMD-9).